Here is a 61-residue protein sequence, read N- to C-terminus: Small ribosomal subunit protein uS14 (61 aa).

Residues C24, C27, C40, and C43 each coordinate Zn(2+).

Belongs to the universal ribosomal protein uS14 family. Zinc-binding uS14 subfamily. In terms of assembly, part of the 30S ribosomal subunit. Contacts proteins S3 and S10. It depends on Zn(2+) as a cofactor.

In terms of biological role, binds 16S rRNA, required for the assembly of 30S particles and may also be responsible for determining the conformation of the 16S rRNA at the A site. The polypeptide is Small ribosomal subunit protein uS14 (Beutenbergia cavernae (strain ATCC BAA-8 / DSM 12333 / CCUG 43141 / JCM 11478 / NBRC 16432 / NCIMB 13614 / HKI 0122)).